We begin with the raw amino-acid sequence, 285 residues long: MVATILDGRMLSKKIRTNVSEKVSLLKQEGITPKLVVILVGEDPASQVYVRNKRKTAHALGIEAVDIRLPENVEEDELIRLIDELNSDGTVHGILVQLPLPKHINENKVTHRIIPEKDVDGFHPLNIGKLFMNIPGPLPCTPRGIMEFFKEYDIPVSGKRVVIVGRSNIVGRPMAALLVNSDATVTIAHSKTKNLAEVTKQADILIVAIGKGEFIDENYVKKGAVVIDVGMNRNNDGKLVGDVNMESVSKVASYITPVPGGVGPMTIAMLMKQTVELAERSVAGE.

Residues 165–167 (GRS) and serine 190 each bind NADP(+).

This sequence belongs to the tetrahydrofolate dehydrogenase/cyclohydrolase family. As to quaternary structure, homodimer.

It catalyses the reaction (6R)-5,10-methylene-5,6,7,8-tetrahydrofolate + NADP(+) = (6R)-5,10-methenyltetrahydrofolate + NADPH. It carries out the reaction (6R)-5,10-methenyltetrahydrofolate + H2O = (6R)-10-formyltetrahydrofolate + H(+). Its pathway is one-carbon metabolism; tetrahydrofolate interconversion. Its function is as follows. Catalyzes the oxidation of 5,10-methylenetetrahydrofolate to 5,10-methenyltetrahydrofolate and then the hydrolysis of 5,10-methenyltetrahydrofolate to 10-formyltetrahydrofolate. The sequence is that of Bifunctional protein FolD from Ligilactobacillus salivarius (strain UCC118) (Lactobacillus salivarius).